A 210-amino-acid chain; its full sequence is Large ribosomal subunit protein bL25 (210 aa).

A disordered region spans residues 190-210; it reads LKSEGAEGGEAEAGQAEEGEE. Acidic residues predominate over residues 196-210; it reads EGGEAEAGQAEEGEE.

Belongs to the bacterial ribosomal protein bL25 family. CTC subfamily. Part of the 50S ribosomal subunit; part of the 5S rRNA/L5/L18/L25 subcomplex. Contacts the 5S rRNA. Binds to the 5S rRNA independently of L5 and L18.

In terms of biological role, this is one of the proteins that binds to the 5S RNA in the ribosome where it forms part of the central protuberance. This Chelativorans sp. (strain BNC1) protein is Large ribosomal subunit protein bL25.